A 271-amino-acid polypeptide reads, in one-letter code: MAFKFKTFAAVGALIGSLALAGCGQDEKDPNHIKVGVIVGAEQQVAEVAQKVAKEKYGLDVELVTFNDYVLPNEALSKGDIDANAFQHKPYLDQQIKDRGYKLVSVGKTFVYPIAGYSKKIKSLDELKDGSQVAVPNDPTNLGRSLLLLQKVGLIKLKDGVGLLPTSLDIVENPKNLKIVELEAPQLPRSLDDAQIALAVINTTYASQIGLTPAKDGIFVEDKDSPYVNLIVTREDNKDAENVKKFVQAYQSDEVYEAANKVFNGGAVKGW.

The signal sequence occupies residues 1 to 22 (MAFKFKTFAAVGALIGSLALAG). Cysteine 23 carries the N-palmitoyl cysteine lipid modification. The S-diacylglycerol cysteine moiety is linked to residue cysteine 23.

It belongs to the NlpA lipoprotein family.

Its subcellular location is the cell membrane. Its function is as follows. This protein is a component of a D-methionine permease, a binding protein-dependent, ATP-driven transport system. This Salmonella typhimurium (strain LT2 / SGSC1412 / ATCC 700720) protein is D-methionine-binding lipoprotein MetQ (metQ).